The chain runs to 105 residues: Large ribosomal subunit protein bL21 (105 aa).

This sequence belongs to the bacterial ribosomal protein bL21 family. As to quaternary structure, part of the 50S ribosomal subunit. Contacts protein L20.

Functionally, this protein binds to 23S rRNA in the presence of protein L20. This is Large ribosomal subunit protein bL21 from Treponema pallidum (strain Nichols).